Consider the following 303-residue polypeptide: Protoheme IX farnesyltransferase 2 (303 aa).

9 helical membrane-spanning segments follow: residues Val-29–Val-49, Leu-51–Phe-71, Ile-96–Thr-118, Leu-123–Leu-143, Asn-150–Thr-170, Ala-177–Ile-197, Cys-223–Met-243, Cys-244–Trp-264, and Phe-281–Val-301.

It belongs to the UbiA prenyltransferase family. Protoheme IX farnesyltransferase subfamily.

Its subcellular location is the cell inner membrane. It catalyses the reaction heme b + (2E,6E)-farnesyl diphosphate + H2O = Fe(II)-heme o + diphosphate. Its pathway is porphyrin-containing compound metabolism; heme O biosynthesis; heme O from protoheme: step 1/1. Functionally, converts heme B (protoheme IX) to heme O by substitution of the vinyl group on carbon 2 of heme B porphyrin ring with a hydroxyethyl farnesyl side group. The chain is Protoheme IX farnesyltransferase 2 from Shewanella frigidimarina (strain NCIMB 400).